Consider the following 611-residue polypeptide: Glutamine--fructose-6-phosphate aminotransferase [isomerizing] (611 aa).

Residue Cys-2 is the Nucleophile; for GATase activity of the active site. A Glutamine amidotransferase type-2 domain is found at 2–219 (CGIVGAVAER…EGDIAEIRRD (218 aa)). SIS domains are found at residues 287-427 (AADL…VRGT) and 460-601 (IAEL…VDQP). Lys-606 serves as the catalytic For Fru-6P isomerization activity.

Homodimer.

The protein localises to the cytoplasm. It catalyses the reaction D-fructose 6-phosphate + L-glutamine = D-glucosamine 6-phosphate + L-glutamate. In terms of biological role, catalyzes the first step in hexosamine metabolism, converting fructose-6P into glucosamine-6P using glutamine as a nitrogen source. This chain is Glutamine--fructose-6-phosphate aminotransferase [isomerizing], found in Pseudomonas putida (strain ATCC 47054 / DSM 6125 / CFBP 8728 / NCIMB 11950 / KT2440).